Here is an 83-residue protein sequence, read N- to C-terminus: Large ribosomal subunit protein bL27 (83 aa).

Belongs to the bacterial ribosomal protein bL27 family.

The chain is Large ribosomal subunit protein bL27 from Bifidobacterium adolescentis (strain ATCC 15703 / DSM 20083 / NCTC 11814 / E194a).